Here is a 168-residue protein sequence, read N- to C-terminus: GTP-dependent dephospho-CoA kinase (168 aa).

Asp40, Val41, Val42, Asp59, and Glu112 together coordinate GTP.

This sequence belongs to the GTP-dependent DPCK family.

The enzyme catalyses 3'-dephospho-CoA + GTP = GDP + CoA + H(+). It functions in the pathway cofactor biosynthesis; coenzyme A biosynthesis. Its function is as follows. Catalyzes the GTP-dependent phosphorylation of the 3'-hydroxyl group of dephosphocoenzyme A to form coenzyme A (CoA). In Methanoregula boonei (strain DSM 21154 / JCM 14090 / 6A8), this protein is GTP-dependent dephospho-CoA kinase.